Here is a 1619-residue protein sequence, read N- to C-terminus: ATP-dependent helicase ULS1 (1619 aa).

The SUMO interacting motif; type a 1 signature appears at 7–10; sequence IDLT. Positions 86–102 are enriched in polar residues; that stretch reads STFNNEKSSNEVKQQQV. Disordered stretches follow at residues 86–123, 200–279, 347–371, and 429–450; these read STFN…SSPS, NNKP…VESS, PILP…NSSI, and SGSN…SVLQ. The span at 103–118 shows a compositional bias: basic and acidic residues; that stretch reads LKEETMGSSNDEKKTQ. Ser-121 carries the phosphoserine modification. The span at 200 to 210 shows a compositional bias: polar residues; it reads NNKPSQQQFSD. The segment covering 211 to 226 has biased composition (basic and acidic residues); the sequence is PETKDNSLKSENKDQI. Polar residues-rich tracts occupy residues 242-259 and 269-279; these read SAFQ…TIPN and LPSNLSSVESS. Positions 353-366 are enriched in basic and acidic residues; the sequence is NMDHTTHNSHDSEQ. The short motif at 371–378 is the SUMO interacting motif; type b 1 element; the sequence is IIILSDED. The short motif at 470–473 is the SUMO interacting motif; type a 2 element; it reads LDTL. Positions 543–550 match the SUMO interacting motif; type b 2 motif; the sequence is ILVDEAEN. Residues 956–1157 enclose the Helicase ATP-binding domain; that stretch reads QVENSAKKGG…YSLIRFLRIP (202 aa). An ATP-binding site is contributed by 969–976; that stretch reads DDMGLGKT. An RING-type zinc finger spans residues 1330-1386; that stretch reads CFWCMEQLEPEAMSVLTGCGHLICDTCIEPFIEESSMLPQAKKTKGGAFAIPCKDCQ. A Helicase C-terminal domain is found at 1447-1606; it reads QCIQVIQRVF…GKIKEVNSLG (160 aa).

Belongs to the SNF2/RAD54 helicase family. Interacts with CDC3, CDC11, EBP2, SIR4, UBC4 and SUMO/SMT3.

It localises to the nucleus. Its function is as follows. ATP-dependent helicase involved mating type switching and in silencing interference through its interaction with the silencing regulator SIR4. Cooperates with UBC4 and UBC5 to mediate ubiquitination of SUMO conjugates. The protein is ATP-dependent helicase ULS1 (ULS1) of Saccharomyces cerevisiae (strain ATCC 204508 / S288c) (Baker's yeast).